The following is a 225-amino-acid chain: C-reactive protein (225 aa).

Residues 1 to 19 form the signal peptide; that stretch reads MAKLLLYFLLLTSLSDVFG. The 202-residue stretch at 24–225 folds into the Pentraxin (PTX) domain; the sequence is SKKTFVFPKE…EVFIKPQLWP (202 aa). C55 and C116 are joined by a disulfide. Positions 80, 158, 159, and 169 each coordinate Ca(2+).

This sequence belongs to the pentraxin family. In terms of assembly, homopentamer. Pentraxin (or pentaxin) have a discoid arrangement of 5 non-covalently bound subunits. Interacts with FCN1; may regulate monocyte activation by FCN1. The cofactor is Ca(2+). As to expression, found in plasma.

The protein localises to the secreted. Displays several functions associated with host defense: it promotes agglutination, bacterial capsular swelling, phagocytosis and complement fixation through its calcium-dependent binding to phosphorylcholine. Can interact with DNA and histones and may scavenge nuclear material released from damaged circulating cells. The protein is C-reactive protein (CRP) of Cavia porcellus (Guinea pig).